Reading from the N-terminus, the 303-residue chain is MYYGFDIGGTKIALGVFDSGRQLQWEKRVPTPRDSYDAFLDAVCELVAEADQRFGCKGSVGIGIPGMPETEDGKLYAANVPAASGKPLRADLSARLDRDVRLDNDANCFALSEAWDDEFTQYPLVMGLILGTGVGGGLVFNGKPITGKSYITGEFGHMRLPVDALTMMGLDFPLRRCGCGQHGCIENYLSGRGFAWLYQHYYHQPLQAPEIIALYDQGDEQARAHVERYLDLLAVSLGNILTIVDPDLVVIGGGLSNFPAITTQLADRLPCHLLPVARVPRIERARHGDAGGMRGAAFLHLTD.

Residues 4 to 11 and 133 to 140 each bind ATP; these read GFDIGGTK and GVGGGLVF. H157, C177, C179, and C184 together coordinate Zn(2+).

It belongs to the ROK (NagC/XylR) family. NagK subfamily.

It catalyses the reaction N-acetyl-D-glucosamine + ATP = N-acetyl-D-glucosamine 6-phosphate + ADP + H(+). It participates in cell wall biogenesis; peptidoglycan recycling. In terms of biological role, catalyzes the phosphorylation of N-acetyl-D-glucosamine (GlcNAc) derived from cell-wall degradation, yielding GlcNAc-6-P. In Shigella flexneri serotype 5b (strain 8401), this protein is N-acetyl-D-glucosamine kinase.